A 194-amino-acid polypeptide reads, in one-letter code: CMRF35-like molecule 5 (194 aa).

Residues 1–18 (MWLSPSLLLLILPGYSIA) form the signal peptide. An Ig-like V-type domain is found at 19–125 (AKITGPTTVN…LGVKVQVTIN (107 aa)). The Extracellular portion of the chain corresponds to 19–165 (AKITGPTTVN…LTRSPLKSTH (147 aa)). Asn28 carries an N-linked (GlcNAc...) asparagine glycan. A disulfide bridge connects residues Cys39 and Cys107. The chain crosses the membrane as a helical span at residues 166–186 (FLFLFLLELPLLLSMLGTVLW). The Cytoplasmic portion of the chain corresponds to 187-194 (VNRPQRRS).

The protein belongs to the CD300 family. As to quaternary structure, forms complexes with the CD300 family members with exception of CD300c. N-glycosylated. In terms of tissue distribution, expression seems restricted to cells of myeloid lineage.

It localises to the cell membrane. This chain is CMRF35-like molecule 5 (CD300LD), found in Homo sapiens (Human).